The following is a 358-amino-acid chain: Sesquiterpene synthase Agr3 (358 aa).

The Mg(2+) site is built by Asp99, Asn246, Ser250, and Glu254. A DDXXD motif motif is present at residues 99–103 (DNISD). Positions 334 and 335 each coordinate (2E,6E)-farnesyl diphosphate.

It belongs to the terpene synthase family. Requires Mg(2+) as cofactor.

It carries out the reaction (2E,6E)-farnesyl diphosphate = alpha-muurolene + diphosphate. The enzyme catalyses (2E,6E)-farnesyl diphosphate = gamma-muurolene + diphosphate. The catalysed reaction is (2E,6E)-farnesyl diphosphate = delta-cadinene + diphosphate. Terpene cyclase that catalyzes the cyclization of farnesyl diphosphate (FPP) to various sesquiterpenes, including alpha-muurolene, gamma-muurolene, germacrene, delta-cadinene, delta-cadinol and cubenol. This chain is Sesquiterpene synthase Agr3, found in Cyclocybe aegerita (Black poplar mushroom).